Reading from the N-terminus, the 63-residue chain is Hirudin-P6 (63 aa).

The segment at 1–3 (MRY) is interaction with thrombin active site. 3 disulfides stabilise this stretch: cysteine 6–cysteine 14, cysteine 16–cysteine 28, and cysteine 22–cysteine 37. Basic and acidic residues predominate over residues 35–55 (KKCVEGEGTRKPQNEGQHDFD). Residues 35–63 (KKCVEGEGTRKPQNEGQHDFDPIPEEYLS) form a disordered region. Threonine 43 is a glycosylation site (O-linked (GalNAc...) threonine). The tract at residues 53-63 (DFDPIPEEYLS) is interaction with fibrinogen-binding exosite of thrombin. The residue at position 61 (tyrosine 61) is a Sulfotyrosine.

This sequence belongs to the protease inhibitor I14 (hirudin) family. In terms of processing, O-linked glycan consists of Fuc-Gal-GalNAc trisaccharide.

It is found in the secreted. Functionally, hirudin is a potent thrombin-specific protease inhibitor. It forms a stable non-covalent complex with alpha-thrombin, thereby abolishing its ability to cleave fibrinogen. The protein is Hirudin-P6 of Hirudinaria manillensis (Asian medical leech).